Reading from the N-terminus, the 456-residue chain is Exodeoxyribonuclease 7 large subunit (456 aa).

The protein belongs to the XseA family. In terms of assembly, heterooligomer composed of large and small subunits.

The protein resides in the cytoplasm. The enzyme catalyses Exonucleolytic cleavage in either 5'- to 3'- or 3'- to 5'-direction to yield nucleoside 5'-phosphates.. Its function is as follows. Bidirectionally degrades single-stranded DNA into large acid-insoluble oligonucleotides, which are then degraded further into small acid-soluble oligonucleotides. The polypeptide is Exodeoxyribonuclease 7 large subunit (Shigella boydii serotype 4 (strain Sb227)).